A 244-amino-acid chain; its full sequence is Short-chain dehydrogenase/reductase family member NovK (244 aa).

NADP(+)-binding positions include 9-12, 59-60, and 154-158; these read GGGE, EL, and RPVLD.

It belongs to the short-chain dehydrogenases/reductases (SDR) family. Heterotetramer; the NovJ(2)K(2) heterotetramer is composed of subunits of 2 NovJ and 2 subunits of NovK.

It participates in antibiotic biosynthesis; novobiocin biosynthesis. Non-catalytic subunit of the NovJ(2)K(2) heterotetramer that catalyzes the NADPH-dependent reduction of the tyrosyl moiety of L-beta-OH-Tyr-S-NovH intermediate to yield the tethered beta-ketotyrosyl-S-NovH in the novobiocin biosynthesis pathway. Novobiocin is an aminocoumarin family antibiotic that targets bacterial DNA gyrases. The chain is Short-chain dehydrogenase/reductase family member NovK (novK) from Streptomyces niveus (Streptomyces spheroides).